Reading from the N-terminus, the 885-residue chain is Exosome complex component 10 (885 aa).

The segment covering 1-10 has biased composition (basic and acidic residues); it reads MAPPSPREHQ. Disordered regions lie at residues 1–23 and 210–232; these read MAPP…PDAE and KPLP…EDLD. K19 is covalently cross-linked (Glycyl lysine isopeptide (Lys-Gly) (interchain with G-Cter in SUMO2)). A compositionally biased stretch (basic and acidic residues) spans 217–230; the sequence is SKERRERPQDRPED. The 167-residue stretch at 289–455 folds into the 3'-5' exonuclease domain; sequence HVVSSLDELV…YIYDRMRLEL (167 aa). Residues D313, E315, D371, and D440 each coordinate Mg(2+). Residues 503–583 form the HRDC domain; it reads NSQQLTAFQL…QQAREMPLLK (81 aa). K583 participates in a covalent cross-link: Glycyl lysine isopeptide (Lys-Gly) (interchain with G-Cter in SUMO1); alternate. Residue K583 forms a Glycyl lysine isopeptide (Lys-Gly) (interchain with G-Cter in SUMO2); alternate linkage. K710 is covalently cross-linked (Glycyl lysine isopeptide (Lys-Gly) (interchain with G-Cter in SUMO2)). A disordered region spans residues 730–885; sequence VQKEPKEAAK…RGFRHNWPKR (156 aa). 2 stretches are compositionally biased toward basic and acidic residues: residues 732–756 and 776–794; these read KEPK…KEES and ATKK…EQKQ. Phosphoserine is present on S821. Residues K833, K859, and K873 each participate in a glycyl lysine isopeptide (Lys-Gly) (interchain with G-Cter in SUMO2) cross-link.

It belongs to the exosome component 10/RRP6 family. Component of the RNA exosome complex. The catalytically inactive RNA exosome core complex (Exo-9) associates with the catalytic subunit EXOSC10/RRP6 (via its N-terminus). Exo-9 may associate with DIS3 to form the nucleolar exosome complex, or DIS3L to form the cytoplasmic exosome complex. The RNA exosome complex interacts with cofactors C1D/RRP47, MPHOSPH6/MPP6 and MTREX/MTR4. Interacts with MTREX; the interaction with MTREX mediates the association of MTREX with nuclear RNA exosomes. Part of the small subunit (SSU) processome, composed of more than 70 proteins and the RNA chaperone small nucleolar RNA (snoRNA) U3. Interacts with ALYREF/THOC4. Interacts with DHX36; this interaction occurs in a RNase-insensitive manner. Interacts with NRDE2. Interacts (via C-terminus) with USP36 (via C-terminus); the interaction is facilitated by the association with RNA and promotes sumoylation of EXOSC10. It depends on Mg(2+) as a cofactor. In terms of processing, sumoylated by USP36; sumoylation does not significantly affect EXOSC10 nucleolar localization and association with core exosome and USP36, but regulates the nucleolar RNA exosome activity in rRNA processing by promoting binding of EXOSC10 to pre-rRNAs. Effects of sumoylation on EXOSC10 levels vary between different studies. Sumoylation of EXOSC10 is required for the modulation of EXOSC10 effects on cellular protein translation and cell proliferation. Sumoylation is promoted by mild hypothermia. Expressed in testis (at protein level).

It is found in the cytoplasm. Its subcellular location is the nucleus. The protein resides in the nucleolus. The protein localises to the nucleoplasm. Catalytic component of the RNA exosome complex which has 3'-&gt;5' exoribonuclease activity and participates in a multitude of cellular RNA processing and degradation events. In the nucleus, the RNA exosome complex is involved in proper maturation of stable RNA species such as rRNA, snRNA and snoRNA, in the elimination of RNA processing by-products and non-coding 'pervasive' transcripts, such as antisense RNA species and promoter-upstream transcripts (PROMPTs), and of mRNAs with processing defects, thereby limiting or excluding their export to the cytoplasm. Part of the small subunit (SSU) processome, first precursor of the small eukaryotic ribosomal subunit. During the assembly of the SSU processome in the nucleolus, many ribosome biogenesis factors, an RNA chaperone and ribosomal proteins associate with the nascent pre-rRNA and work in concert to generate RNA folding, modifications, rearrangements and cleavage as well as targeted degradation of pre-ribosomal RNA by the RNA exosome. The RNA exosome may be involved in Ig class switch recombination (CSR) and/or Ig variable region somatic hypermutation (SHM) by targeting AICDA deamination activity to transcribed dsDNA substrates. In the cytoplasm, the RNA exosome complex is involved in general mRNA turnover and specifically degrades inherently unstable mRNAs containing AU-rich elements (AREs) within their 3' untranslated regions, and in RNA surveillance pathways, preventing translation of aberrant mRNAs. It seems to be involved in degradation of histone mRNA. EXOSC10 is required for nucleolar localization of C1D and probably mediates the association of MTREX, C1D and MPHOSPH6 with the RNA exosome involved in the maturation of 5.8S rRNA. Plays a role in the recruitment of replication protein A complex (RPA) and RAD51 to DNA double-strand breaks caused by irradiation, contributing to DNA repair by homologous recombination. Regulates levels of damage-induced RNAs in order to prevent DNA-RNA hybrid formation at DNA double-strand breaks and limit DNA end resection after damage. Plays a role in oocyte development, maturation and survival. Required for normal testis development and mitotic division of spermatogonia. Plays a role in proper embryo development. Required for global protein translation. Required for cell proliferation. In Rattus norvegicus (Rat), this protein is Exosome complex component 10.